The sequence spans 102 residues: Large ribosomal subunit protein bL21 (102 aa).

Belongs to the bacterial ribosomal protein bL21 family. As to quaternary structure, part of the 50S ribosomal subunit. Contacts protein L20.

This protein binds to 23S rRNA in the presence of protein L20. This chain is Large ribosomal subunit protein bL21, found in Saccharopolyspora erythraea (strain ATCC 11635 / DSM 40517 / JCM 4748 / NBRC 13426 / NCIMB 8594 / NRRL 2338).